Consider the following 210-residue polypeptide: Urease accessory protein UreF (210 aa).

It belongs to the UreF family. UreD, UreF and UreG form a complex that acts as a GTP-hydrolysis-dependent molecular chaperone, activating the urease apoprotein by helping to assemble the nickel containing metallocenter of UreC. The UreE protein probably delivers the nickel.

The protein localises to the cytoplasm. Functionally, required for maturation of urease via the functional incorporation of the urease nickel metallocenter. The protein is Urease accessory protein UreF of Cereibacter sphaeroides (strain ATCC 17023 / DSM 158 / JCM 6121 / CCUG 31486 / LMG 2827 / NBRC 12203 / NCIMB 8253 / ATH 2.4.1.) (Rhodobacter sphaeroides).